Here is a 112-residue protein sequence, read N- to C-terminus: uncharacterized protein (112 aa).

A signal peptide spans 1 to 25 (MKGTKLAVVVGMTVAAVSLAAPAQA).

This is an uncharacterized protein from Mycobacterium tuberculosis (strain CDC 1551 / Oshkosh).